Consider the following 507-residue polypeptide: MTSTATSGESAVRTYQVRTYGCQMNVHDSERVSGLLDAAGYVKAPEGTDADIVIFNTCAVRENADNKLYGNISHLAPRKAANPNMQIAVGGCLAQKDREGMLAKAPWVDVVFGTHNIGSLPALLERARHNNEAQVEIVEALEHFPSALPATRESAYAAWVSISVGCNNTCTFCIVPSLRGKEIDRRPGDILGEVQALVDQGVLEVTLLGQNVNAYGVNFADPEIPRDRGAFAELLRACGRIDGLERVRFTSPHPAEFTDDVIEAMAQTPNVCPQLHMPLQSGSDRILKAMRRSYRSERFLSIIDKVRSAMPDAAITTDIIVGFPGETEEDFQQTLEVVRRARFSSAFTFQYSIRPGTPAAKLPDQLPKAVVQERYDRLIALQESVTLEENQKQIGRMIEVLIATGEGRKDGETARMSGRARDGRLVHFRPQGHVDGALRPGDIITVDVTGAAPHHLIADDGVRSHRRTRAGDAHEAGKKPSTPGIGLGMPAIGAPKTERIEVAGCGL.

The 117-residue stretch at Arg13–His129 folds into the MTTase N-terminal domain. The [4Fe-4S] cluster site is built by Cys22, Cys58, Cys92, Cys166, Cys170, and Cys173. The Radical SAM core domain occupies Arg152–Glu388. Residues Gln391–Val462 enclose the TRAM domain. The segment covering Asp459 to Lys478 has biased composition (basic and acidic residues). Residues Asp459 to Ile492 are disordered.

Belongs to the methylthiotransferase family. MiaB subfamily. In terms of assembly, monomer. Requires [4Fe-4S] cluster as cofactor.

The protein resides in the cytoplasm. It carries out the reaction N(6)-dimethylallyladenosine(37) in tRNA + (sulfur carrier)-SH + AH2 + 2 S-adenosyl-L-methionine = 2-methylsulfanyl-N(6)-dimethylallyladenosine(37) in tRNA + (sulfur carrier)-H + 5'-deoxyadenosine + L-methionine + A + S-adenosyl-L-homocysteine + 2 H(+). Its function is as follows. Catalyzes the methylthiolation of N6-(dimethylallyl)adenosine (i(6)A), leading to the formation of 2-methylthio-N6-(dimethylallyl)adenosine (ms(2)i(6)A) at position 37 in tRNAs that read codons beginning with uridine. The polypeptide is tRNA-2-methylthio-N(6)-dimethylallyladenosine synthase (Mycobacteroides abscessus (strain ATCC 19977 / DSM 44196 / CCUG 20993 / CIP 104536 / JCM 13569 / NCTC 13031 / TMC 1543 / L948) (Mycobacterium abscessus)).